A 72-amino-acid polypeptide reads, in one-letter code: High-potential iron-sulfur protein isozyme 1 (72 aa).

Positions 34, 37, 51, and 65 each coordinate [4Fe-4S] cluster.

Belongs to the high-potential iron-sulfur protein (HiPIP) family. In terms of assembly, homodimer.

Specific class of high-redox-potential 4Fe-4S ferredoxins. Functions in anaerobic electron transport in most purple and in some other photosynthetic bacteria and in at least one genus (Paracoccus) of halophilic, denitrifying bacteria. The chain is High-potential iron-sulfur protein isozyme 1 (hip1) from Ectothiorhodospira shaposhnikovii (Ectothiorhodospira vacuolata).